A 452-amino-acid chain; its full sequence is Prenyltransferase fsdK (452 aa).

Belongs to the tryptophan dimethylallyltransferase family.

The protein operates within mycotoxin biosynthesis. Prenyltransferase; part of the gene cluster that mediates the biosynthesis of fusaridione A, a bright yellow trans-fused decalin-containing tetramic acid with antimicrobial activity. The PKS module of fsdS catalyzes the formation of the polyketide unit which is then conjugated to L-tyrosine by the condensation domain of the fsdS NRPS module. Activity of the Dieckmann cyclase domain (RED) results in release of the intermediate fusaridione A. The unstable pyrrolidinedione ring of fusaridione A is opened through a reverse-Dieckmann reaction to afford its ring-opened form. This Fusarium heterosporum protein is Prenyltransferase fsdK.